Consider the following 402-residue polypeptide: MKEKVVLAYSGGLDTSITIHWLKENYNLDVIACCVNVGQDEDFDEIKKKAIKSGATKIYVEDVKDEFVSEYIYKGVKANAVYEGKYLLGTSFARPLIAKKLVEVAHKEGAKYICHGCTGKGNDQVRFEVGIMSLDPSIKVIAPWRIWNIKSREDAVDYANANGIEVPVTKEKIYSRDQNLWHISHEGGDLENIRNEHKTDMYCMTVPPEKAKDEVSYIKITFEKGEAKKLDDVEMSPVEILEKLNKIGGENGIGVIDLLENRLVGMKSRGVYETPGGTILYAAHKELEYLTMQKETFHFKQMVSQKYGELVYNGLWFSTLKESLDAFIDKTQEVVNGTVRLKLYKGNIMVAGMESPNALYEESISSFGASDFYDHKDAEGFINLFGLPYKINAMIQLKNQEN.

8 to 16 (AYSGGLDTS) contacts ATP. L-citrulline-binding residues include Y86 and S91. An ATP-binding site is contributed by G116. Residues T118, N122, and D123 each contribute to the L-aspartate site. L-citrulline is bound at residue N122. L-citrulline is bound by residues R126, S175, S184, E260, and Y272.

Belongs to the argininosuccinate synthase family. Type 1 subfamily. As to quaternary structure, homotetramer.

Its subcellular location is the cytoplasm. It carries out the reaction L-citrulline + L-aspartate + ATP = 2-(N(omega)-L-arginino)succinate + AMP + diphosphate + H(+). The protein operates within amino-acid biosynthesis; L-arginine biosynthesis; L-arginine from L-ornithine and carbamoyl phosphate: step 2/3. The chain is Argininosuccinate synthase from Clostridium novyi (strain NT).